The chain runs to 406 residues: Cytochrome P450 165C4 (406 aa).

C356 contributes to the heme binding site.

Belongs to the cytochrome P450 family. Requires heme as cofactor.

The protein operates within antibiotic biosynthesis; vancomycin biosynthesis. Functionally, involved in the coupling of aromatic side chains of the heptapeptide of vancomycin. This chain is Cytochrome P450 165C4 (cyp165C4), found in Amycolatopsis orientalis (Nocardia orientalis).